The following is a 340-amino-acid chain: MAQFPLLGHGFPPEPVNHPLGGPRGLDVAGPTICPAPEEEPSRPEQVQASLDAPEHFMDEPKSTESATSPSKLPLASSHEHQDGGKPCEALQAELQGAAERVDALLVFGEGLAERSEPRAWTSLEQVLRALGTHRDTIFQRLWQLQAQLISYSLVLEKANLLDQDLEVEGDSDGPAAGGVWGPWAPSIFPTPAELEWDPAGDVGGLGPSGQKISRIPGAPCELCGYRGSQSSGQGFEDLLSLGLGHRKHLAAHHRRRLQKPQDKKRQGPPSLPDAMLEVDRGVPAPASRRPLTFLLLLLFLLLVGATLLLPLSGVPCCSHTRLARTPYLVLSYVNGLPPI.

Disordered stretches follow at residues 1 to 86 and 254 to 277; these read MAQF…DGGK and HRRRLQKPQDKKRQGPPSLPDAML. The Cytoplasmic portion of the chain corresponds to 1-291; the sequence is MAQFPLLGHG…GVPAPASRRP (291 aa). A compositionally biased stretch (basic and acidic residues) spans 53 to 63; that stretch reads APEHFMDEPKS. The region spanning 283–340 is the KASH domain; it reads VPAPASRRPLTFLLLLLFLLLVGATLLLPLSGVPCCSHTRLARTPYLVLSYVNGLPPI. A helical; Anchor for type IV membrane protein membrane pass occupies residues 292–312; that stretch reads LTFLLLLLFLLLVGATLLLPL. The Perinuclear space portion of the chain corresponds to 313–340; that stretch reads SGVPCCSHTRLARTPYLVLSYVNGLPPI.

The protein belongs to the nesprin family. As to quaternary structure, core component of LINC complexes which are composed of inner nuclear membrane SUN domain-containing proteins coupled to outer nuclear membrane KASH domain-containing nesprins. SUN and KASH domain-containing proteins seem to bind each other promiscuously; however, differentially expression of LINC complex constituents can give rise to specific assemblies. Probably part of a SUN1-containing LINC complex. Interacts with kinesins KIF5B and KLC1.

The protein resides in the nucleus outer membrane. Its function is as follows. As a component of the LINC (LInker of Nucleoskeleton and Cytoskeleton) complex, involved in the connection between the nuclear lamina and the cytoskeleton. The nucleocytoplasmic interactions established by the LINC complex play an important role in the transmission of mechanical forces across the nuclear envelope and in nuclear movement and positioning. Behaves as a kinesin cargo, providing a functional binding site for kinesin-1 at the nuclear envelope. Hence may contribute to the establishment of secretory epithelial morphology, by promoting kinesin-dependent apical migration of the centrosome and Golgi apparatus and basal localization of the nucleus. This chain is Nesprin-4 (Syne4), found in Rattus norvegicus (Rat).